The sequence spans 104 residues: Disrupted in renal carcinoma protein 1 (104 aa).

The disordered stretch occupies residues 1–23 (MPEAHMQPAKLQTSLPTTDHGSK). Over residues 10-19 (KLQTSLPTTD) the composition is skewed to polar residues.

As to expression, expressed at low steady-state level in adult placenta, testis, ovary, prostate, fetal kidney, spleen and skeletal muscle.

The polypeptide is Disrupted in renal carcinoma protein 1 (DIRC1) (Homo sapiens (Human)).